The sequence spans 626 residues: DNA mismatch repair protein MutL (626 aa).

The protein belongs to the DNA mismatch repair MutL/HexB family.

In terms of biological role, this protein is involved in the repair of mismatches in DNA. It is required for dam-dependent methyl-directed DNA mismatch repair. May act as a 'molecular matchmaker', a protein that promotes the formation of a stable complex between two or more DNA-binding proteins in an ATP-dependent manner without itself being part of a final effector complex. This is DNA mismatch repair protein MutL from Pelodictyon phaeoclathratiforme (strain DSM 5477 / BU-1).